Consider the following 545-residue polypeptide: Thermosome subunit alpha (545 aa).

It belongs to the TCP-1 chaperonin family. Forms a Heterooligomeric complex of two stacked eight-membered rings.

In terms of biological role, molecular chaperone; binds unfolded polypeptides in vitro, and has a weak ATPase activity. The protein is Thermosome subunit alpha (thsA) of Archaeoglobus fulgidus (strain ATCC 49558 / DSM 4304 / JCM 9628 / NBRC 100126 / VC-16).